We begin with the raw amino-acid sequence, 126 residues long: Small ribosomal subunit protein bS6 (126 aa).

A disordered region spans residues 101–126 (VMMKAKEERTAKREDAAPRAEEAAAE). The segment covering 104 to 126 (KAKEERTAKREDAAPRAEEAAAE) has biased composition (basic and acidic residues).

This sequence belongs to the bacterial ribosomal protein bS6 family.

Functionally, binds together with bS18 to 16S ribosomal RNA. The polypeptide is Small ribosomal subunit protein bS6 (Aliivibrio salmonicida (strain LFI1238) (Vibrio salmonicida (strain LFI1238))).